Reading from the N-terminus, the 351-residue chain is Transcriptional activator POG1 (351 aa).

The span at 1 to 26 (MKQEPHRQSEEKEKPKGPMAVEREQH) shows a compositional bias: basic and acidic residues. Residues 1 to 56 (MKQEPHRQSEEKEKPKGPMAVEREQHTSLSSGTTVTASTGDESTNSRPVESSQTEK) are disordered. The span at 27-56 (TSLSSGTTVTASTGDESTNSRPVESSQTEK) shows a compositional bias: polar residues. A phosphoserine mark is found at Ser-152 and Ser-168. Disordered regions lie at residues 234–256 (PGMG…TPVM) and 291–351 (QHQL…PPPT). A compositionally biased stretch (polar residues) spans 241 to 256 (QLPTMSSNSESQTPVM). A Phosphoserine modification is found at Ser-314.

Belongs to the POG1 family. Post-translationally, phosphorylated by CDC28.

Its subcellular location is the nucleus. Its function is as follows. Transcriptional activator which promotes cell cycle recovery with CLN2, after pheromone induced G1 arrest, probably inhibiting the ability of STE20 to activate the pheromone response pathway. Binds the promoters of genes that function in cell cycle regulation, cytoskeletal organization, and spindle assembly. May also be involved in stress-resistance. The chain is Transcriptional activator POG1 (POG1) from Saccharomyces cerevisiae (strain ATCC 204508 / S288c) (Baker's yeast).